Reading from the N-terminus, the 314-residue chain is Testis-specific Y-encoded protein 4 (314 aa).

It belongs to the nucleosome assembly protein (NAP) family.

The protein resides in the cytoplasm. Its subcellular location is the nucleus. May be involved in sperm differentiation and proliferation. In Homo sapiens (Human), this protein is Testis-specific Y-encoded protein 4 (TSPY4).